We begin with the raw amino-acid sequence, 276 residues long: Ribonuclease T2 (276 aa).

A signal peptide spans 1–17; that stretch reads MGMLALGAMQLAAGAVF. Intrachain disulfides connect Cys-22/Cys-41, Cys-30/Cys-77, Cys-40/Cys-143, Cys-85/Cys-135, and Cys-208/Cys-242. An N-linked (GlcNAc...) asparagine glycan is attached at Asn-32. Residue His-70 is part of the active site. N-linked (GlcNAc...) asparagine glycosylation occurs at Asn-93. Catalysis depends on residues Glu-128 and His-132. A glycan (N-linked (GlcNAc...) asparagine) is linked at Asn-256.

It belongs to the RNase T2 family.

It carries out the reaction a ribonucleotidyl-ribonucleotide-RNA + H2O = a 3'-end 3'-phospho-ribonucleotide-RNA + a 5'-end dephospho-ribonucleoside-RNA + H(+). The protein is Ribonuclease T2 (rntB) of Aspergillus oryzae (strain ATCC 42149 / RIB 40) (Yellow koji mold).